We begin with the raw amino-acid sequence, 243 residues long: Probable transcriptional regulatory protein Tbd_2215 (243 aa).

This sequence belongs to the TACO1 family.

Its subcellular location is the cytoplasm. In Thiobacillus denitrificans (strain ATCC 25259 / T1), this protein is Probable transcriptional regulatory protein Tbd_2215.